The following is a 192-amino-acid chain: Neurogenic differentiation factor 1 (192 aa).

The 53-residue stretch at 19–71 (VRRVKANGRERARMHGLNNALDMLREYIPITTQHQKLSKIETLRLARNYIDAL) folds into the bHLH domain. Positions 116–192 (PSQFDIFSDP…SHQNTFNYSP (77 aa)) are disordered. A compositionally biased stretch (low complexity) spans 139-163 (SSFSSSSPSSSCSPPQYYYSPTQPS).

As to expression, expressed in neuroblasts of the AB lineage. More specifically in precursors of the embryonic ventral cord motor neurons. Expressed to a lesser degree in the EMS lineage which generates mostly endoderm and mesoderm tissues.

It localises to the nucleus. Functionally, acts as a transcriptional regulator whose activity is required for several aspects of motor neuron fate specification, including cell division patterns, proper spatiotemporal expression of fate-specific markers, and normal axonal morphology and pathfinding. Involved in regulating glial specification. This Caenorhabditis elegans protein is Neurogenic differentiation factor 1 (cnd-1).